The chain runs to 194 residues: ATP-dependent Clp protease proteolytic subunit (194 aa).

S97 functions as the Nucleophile in the catalytic mechanism. Residue H122 is part of the active site.

Belongs to the peptidase S14 family. As to quaternary structure, fourteen ClpP subunits assemble into 2 heptameric rings which stack back to back to give a disk-like structure with a central cavity, resembling the structure of eukaryotic proteasomes.

The protein localises to the cytoplasm. It catalyses the reaction Hydrolysis of proteins to small peptides in the presence of ATP and magnesium. alpha-casein is the usual test substrate. In the absence of ATP, only oligopeptides shorter than five residues are hydrolyzed (such as succinyl-Leu-Tyr-|-NHMec, and Leu-Tyr-Leu-|-Tyr-Trp, in which cleavage of the -Tyr-|-Leu- and -Tyr-|-Trp bonds also occurs).. In terms of biological role, cleaves peptides in various proteins in a process that requires ATP hydrolysis. Has a chymotrypsin-like activity. Plays a major role in the degradation of misfolded proteins. This is ATP-dependent Clp protease proteolytic subunit from Campylobacter jejuni subsp. jejuni serotype O:23/36 (strain 81-176).